Consider the following 392-residue polypeptide: p21-activated protein kinase-interacting protein 1 (392 aa).

WD repeat units lie at residues 33–72, 73–113, 114–155, 156–195, 196–235, and 236–275; these read VADFTHHAHTASLSAVAVNSRFVVTGSKDETIHIYDMKKK, IEHG…AKKW, ECLK…LVEG, RSAFIKNIKQNAHIVEWSPRGEQYVVIIQNKIDIYQLDTA, SISGTITNEKRISSVKFLSESVLAVAGDEEVIRFFDCDSL, and VCLCEFKAHENRVKDMFSFEIPEHHVIVSASSDGFIKMWK. Positions 312–392 are disordered; the sequence is SLPPAAEPSP…RKKKKIKTMQ (81 aa). Ser320 is modified (phosphoserine). The span at 325–345 shows a compositional bias: basic and acidic residues; that stretch reads EQSKIGKKEPGDTVHKEEKRS. Positions 381 to 392 are enriched in basic residues; that stretch reads KKRKKKKIKTMQ.

In terms of assembly, interacts with PAK1. Expressed in brain, colon, heart, kidney, liver, lung, muscle, peripheral blood leukocytes, placenta, small intestine, spleen and thymus.

It is found in the nucleus. The protein resides in the nucleolus. In terms of biological role, negatively regulates the PAK1 kinase. PAK1 is a member of the PAK kinase family, which has been shown to play a positive role in the regulation of signaling pathways involving MAPK8 and RELA. PAK1 exists as an inactive homodimer, which is activated by binding of small GTPases such as CDC42 to an N-terminal regulatory domain. PAK1IP1 also binds to the N-terminus of PAK1, and inhibits the specific activation of PAK1 by CDC42. May be involved in ribosomal large subunit assembly. This Homo sapiens (Human) protein is p21-activated protein kinase-interacting protein 1 (PAK1IP1).